An 88-amino-acid polypeptide reads, in one-letter code: Large ribosomal subunit protein eL31 (88 aa).

Belongs to the eukaryotic ribosomal protein eL31 family.

The chain is Large ribosomal subunit protein eL31 from Methanoregula boonei (strain DSM 21154 / JCM 14090 / 6A8).